A 514-amino-acid polypeptide reads, in one-letter code: ATP synthase subunit alpha (514 aa).

170 to 177 (GDRQIGKS) serves as a coordination point for ATP.

This sequence belongs to the ATPase alpha/beta chains family. F-type ATPases have 2 components, CF(1) - the catalytic core - and CF(0) - the membrane proton channel. CF(1) has five subunits: alpha(3), beta(3), gamma(1), delta(1), epsilon(1). CF(0) has three main subunits: a(1), b(2) and c(9-12). The alpha and beta chains form an alternating ring which encloses part of the gamma chain. CF(1) is attached to CF(0) by a central stalk formed by the gamma and epsilon chains, while a peripheral stalk is formed by the delta and b chains.

It is found in the cell inner membrane. The enzyme catalyses ATP + H2O + 4 H(+)(in) = ADP + phosphate + 5 H(+)(out). In terms of biological role, produces ATP from ADP in the presence of a proton gradient across the membrane. The alpha chain is a regulatory subunit. In Chromohalobacter salexigens (strain ATCC BAA-138 / DSM 3043 / CIP 106854 / NCIMB 13768 / 1H11), this protein is ATP synthase subunit alpha.